Here is a 145-residue protein sequence, read N- to C-terminus: Cell division protein SepF (145 aa).

Belongs to the SepF family. In terms of assembly, homodimer. Interacts with FtsZ.

Its subcellular location is the cytoplasm. Cell division protein that is part of the divisome complex and is recruited early to the Z-ring. Probably stimulates Z-ring formation, perhaps through the cross-linking of FtsZ protofilaments. Its function overlaps with FtsA. This is Cell division protein SepF from Lactobacillus helveticus (strain DPC 4571).